A 363-amino-acid chain; its full sequence is MAP kinase kinase mkk-4 (363 aa).

Residues methionine 1–glutamate 38 are disordered. Residues serine 14–serine 28 show a composition bias toward low complexity. The 265-residue stretch at leucine 66 to tyrosine 330 folds into the Protein kinase domain. ATP-binding positions include isoleucine 72–valine 80 and lysine 95. Residue aspartate 194 is the Proton acceptor of the active site.

Belongs to the protein kinase superfamily. STE Ser/Thr protein kinase family. MAP kinase kinase subfamily. As to expression, expressed in the pharynx, including the corpus, isthmus and terminal bulb.

It is found in the cytoplasm. The catalysed reaction is L-seryl-[protein] + ATP = O-phospho-L-seryl-[protein] + ADP + H(+). The enzyme catalyses L-threonyl-[protein] + ATP = O-phospho-L-threonyl-[protein] + ADP + H(+). It catalyses the reaction L-tyrosyl-[protein] + ATP = O-phospho-L-tyrosyl-[protein] + ADP + H(+). Functionally, activity is required in presynaptic neurons, in a dose-dependent manner, for normal presynaptic development and morphology. Plays a role in the formation of muscle connections, also called muscle arm extensions, between the body wall and the motor axons in the dorsal and ventral cord. The sequence is that of MAP kinase kinase mkk-4 (mkk-4) from Caenorhabditis elegans.